Consider the following 395-residue polypeptide: Ankyrin repeat domain-containing protein 65 (395 aa).

10 ANK repeats span residues 52–81, 85–114, 118–147, 151–180, 185–212, 213–241, 245–274, 278–307, 311–340, and 344–373; these read QAWG…SVEE, AGRT…QVGA, AGRT…PANA, AGLT…PGPT, RGWT…GGAR, LDSV…PVDA, VGAT…DPSL, HGRS…EVDS, LGLT…EINA, and LHKT…SPTL.

In Bos taurus (Bovine), this protein is Ankyrin repeat domain-containing protein 65 (ANKRD65).